Reading from the N-terminus, the 883-residue chain is Kinesin-like protein 5 (883 aa).

Residues Ser-6 to Ile-390 enclose the Kinesin motor domain. Gly-144–Thr-151 is an ATP binding site. Coiled coils occupy residues Arg-396 to Ser-435 and Leu-563 to Phe-588. Residues Val-755 to Gln-785 form a disordered region.

The protein belongs to the TRAFAC class myosin-kinesin ATPase superfamily. Kinesin family. Kinesin II subfamily. In terms of assembly, heterodimer with klp6.

It is found in the cytoplasm. It localises to the cytoskeleton. The protein resides in the chromosome. The protein localises to the centromere. Its subcellular location is the kinetochore. It is found in the spindle. Has a role in establishing metaphase during mitosis. Required for chromosome segregation where it generates tension during kinetochore capturing. The protein is Kinesin-like protein 5 (klp5) of Schizosaccharomyces pombe (strain 972 / ATCC 24843) (Fission yeast).